The primary structure comprises 298 residues: ATP synthase F(1) complex subunit gamma, mitochondrial (298 aa).

The N-terminal 25 residues, Met-1–Met-25, are a transit peptide targeting the mitochondrion. The residue at position 39 (Lys-39) is an N6-acetyllysine. At Lys-49 the chain carries N6-succinyllysine. Lys-55 bears the N6-acetyllysine mark. Lys-115 is subject to N6-acetyllysine; alternate. Lys-115 is subject to N6-succinyllysine; alternate. Ser-146 bears the Phosphoserine mark. Position 154 is an N6-acetyllysine; alternate (Lys-154). Residue Lys-154 is modified to N6-succinyllysine; alternate. Lys-197 is subject to N6-acetyllysine. Position 270 is an N6-succinyllysine (Lys-270).

Belongs to the ATPase gamma chain family. Component of the ATP synthase complex composed at least of ATP5F1A/subunit alpha, ATP5F1B/subunit beta, ATP5MC1/subunit c (homooctomer), MT-ATP6/subunit a, MT-ATP8/subunit 8, ATP5ME/subunit e, ATP5MF/subunit f, ATP5MG/subunit g, ATP5MK/subunit k, ATP5MJ/subunit j, ATP5F1C/subunit gamma, ATP5F1D/subunit delta, ATP5F1E/subunit epsilon, ATP5PF/subunit F6, ATP5PB/subunit b, ATP5PD/subunit d, ATP5PO/subunit OSCP. ATP synthase complex consists of a soluble F(1) head domain (subunits alpha(3) and beta(3)) - the catalytic core - and a membrane F(0) domain - the membrane proton channel (subunits c, a, 8, e, f, g, k and j). These two domains are linked by a central stalk (subunits gamma, delta, and epsilon) rotating inside the F1 region and a stationary peripheral stalk (subunits F6, b, d, and OSCP). Interacts with FLVCR2; this interaction occurs in the absence of heme and is disrupted upon heme binding.

The protein localises to the mitochondrion inner membrane. In terms of biological role, subunit gamma, of the mitochondrial membrane ATP synthase complex (F(1)F(0) ATP synthase or Complex V) that produces ATP from ADP in the presence of a proton gradient across the membrane which is generated by electron transport complexes of the respiratory chain. ATP synthase complex consist of a soluble F(1) head domain - the catalytic core - and a membrane F(1) domain - the membrane proton channel. These two domains are linked by a central stalk rotating inside the F(1) region and a stationary peripheral stalk. During catalysis, ATP synthesis in the catalytic domain of F(1) is coupled via a rotary mechanism of the central stalk subunits to proton translocation. In vivo, can only synthesize ATP although its ATP hydrolase activity can be activated artificially in vitro. With the central stalk subunit delta, is essential for the biogenesis of F(1) catalytic part of the ATP synthase complex namely in the formation of F1 assembly intermediate. This is ATP synthase F(1) complex subunit gamma, mitochondrial from Macaca fascicularis (Crab-eating macaque).